The following is a 254-amino-acid chain: 5'-nucleotidase SurE (254 aa).

Positions 8, 9, 39, and 91 each coordinate a divalent metal cation.

This sequence belongs to the SurE nucleotidase family. A divalent metal cation serves as cofactor.

The protein localises to the cytoplasm. It carries out the reaction a ribonucleoside 5'-phosphate + H2O = a ribonucleoside + phosphate. Functionally, nucleotidase that shows phosphatase activity on nucleoside 5'-monophosphates. This chain is 5'-nucleotidase SurE, found in Pseudoalteromonas translucida (strain TAC 125).